The chain runs to 112 residues: Peptidyl-tRNA hydrolase (112 aa).

This sequence belongs to the PTH2 family.

Its subcellular location is the cytoplasm. The enzyme catalyses an N-acyl-L-alpha-aminoacyl-tRNA + H2O = an N-acyl-L-amino acid + a tRNA + H(+). In terms of biological role, the natural substrate for this enzyme may be peptidyl-tRNAs which drop off the ribosome during protein synthesis. This Haloquadratum walsbyi (strain DSM 16790 / HBSQ001) protein is Peptidyl-tRNA hydrolase.